The chain runs to 227 residues: Cytochrome c oxidase subunit 2 (227 aa).

Over 1–14 (MANHSQLGFQDASS) the chain is Mitochondrial intermembrane. The chain crosses the membrane as a helical span at residues 15-45 (PIMEELVEFHDHALMVALAICSLVLYLLTLM). Topologically, residues 46 to 58 (LMEKLSSNTVDAQ) are mitochondrial matrix. A helical membrane pass occupies residues 59–86 (EVELIWTILPAIVLVLLALPSLQILYMM). The Mitochondrial intermembrane segment spans residues 87–227 (DEIDEPDLTL…FEAWSSLLSS (141 aa)). Cu cation-binding residues include His160, Cys195, Glu197, Cys199, His203, and Met206. Glu197 is a binding site for Mg(2+).

Belongs to the cytochrome c oxidase subunit 2 family. In terms of assembly, component of the cytochrome c oxidase (complex IV, CIV), a multisubunit enzyme composed of 14 subunits. The complex is composed of a catalytic core of 3 subunits MT-CO1, MT-CO2 and MT-CO3, encoded in the mitochondrial DNA, and 11 supernumerary subunits COX4I, COX5A, COX5B, COX6A, COX6B, COX6C, COX7A, COX7B, COX7C, COX8 and NDUFA4, which are encoded in the nuclear genome. The complex exists as a monomer or a dimer and forms supercomplexes (SCs) in the inner mitochondrial membrane with NADH-ubiquinone oxidoreductase (complex I, CI) and ubiquinol-cytochrome c oxidoreductase (cytochrome b-c1 complex, complex III, CIII), resulting in different assemblies (supercomplex SCI(1)III(2)IV(1) and megacomplex MCI(2)III(2)IV(2)). Found in a complex with TMEM177, COA6, COX18, COX20, SCO1 and SCO2. Interacts with TMEM177 in a COX20-dependent manner. Interacts with COX20. Interacts with COX16. Requires Cu cation as cofactor.

Its subcellular location is the mitochondrion inner membrane. The catalysed reaction is 4 Fe(II)-[cytochrome c] + O2 + 8 H(+)(in) = 4 Fe(III)-[cytochrome c] + 2 H2O + 4 H(+)(out). Its function is as follows. Component of the cytochrome c oxidase, the last enzyme in the mitochondrial electron transport chain which drives oxidative phosphorylation. The respiratory chain contains 3 multisubunit complexes succinate dehydrogenase (complex II, CII), ubiquinol-cytochrome c oxidoreductase (cytochrome b-c1 complex, complex III, CIII) and cytochrome c oxidase (complex IV, CIV), that cooperate to transfer electrons derived from NADH and succinate to molecular oxygen, creating an electrochemical gradient over the inner membrane that drives transmembrane transport and the ATP synthase. Cytochrome c oxidase is the component of the respiratory chain that catalyzes the reduction of oxygen to water. Electrons originating from reduced cytochrome c in the intermembrane space (IMS) are transferred via the dinuclear copper A center (CU(A)) of subunit 2 and heme A of subunit 1 to the active site in subunit 1, a binuclear center (BNC) formed by heme A3 and copper B (CU(B)). The BNC reduces molecular oxygen to 2 water molecules using 4 electrons from cytochrome c in the IMS and 4 protons from the mitochondrial matrix. The sequence is that of Cytochrome c oxidase subunit 2 (MT-CO2) from Gallus gallus (Chicken).